The primary structure comprises 124 residues: Apolipoprotein C-IV (124 aa).

An N-terminal signal peptide occupies residues 1–27; it reads MSLLRCRPRDLPSVSLSVLFLVSFVAS. Asn-107 carries an N-linked (GlcNAc...) asparagine glycan.

This sequence belongs to the apolipoprotein C4 family. As to expression, expressed by the liver and secreted in plasma.

Its subcellular location is the secreted. In terms of biological role, may participate in lipoprotein metabolism. The protein is Apolipoprotein C-IV (Apoc4) of Mus musculus (Mouse).